A 206-amino-acid polypeptide reads, in one-letter code: Ras-related protein Rab-18 (206 aa).

Position 1 is an N-acetylmethionine (M1). Residues S17, G20, K21, S22, S23, D34, P35, T40, G66, K123, and D125 each coordinate GTP. S22 contributes to the Mg(2+) binding site. Short sequence motifs (switch) lie at residues 31 to 45 and 63 to 80; these read DTFD…GVDF and DTAG…YYRG. T40 provides a ligand contact to Mg(2+). Phosphoserine is present on S144. A152 contacts GTP. A lipid anchor (S-palmitoyl cysteine) is attached at C199. C203 bears the Cysteine methyl ester mark. C203 carries the S-geranylgeranyl cysteine lipid modification. The propeptide at 204 to 206 is removed in mature form; that stretch reads SVL.

The protein belongs to the small GTPase superfamily. Rab family. Interacts (in GTP-bound form) with ZFYVE1. Interacts with ZW10 and this interaction is enhanced in the presence of ZFYVE1. Interacts with BSCL2. Mg(2+) serves as cofactor.

It is found in the endoplasmic reticulum membrane. The protein localises to the golgi apparatus. It localises to the cis-Golgi network membrane. Its subcellular location is the lipid droplet. The protein resides in the apical cell membrane. It carries out the reaction GTP + H2O = GDP + phosphate + H(+). Regulated by guanine nucleotide exchange factors (GEFs) which promote the exchange of bound GDP for free GTP. Regulated by GTPase activating proteins (GAPs) which increase the GTP hydrolysis activity at the ER membrane. Inhibited by GDP dissociation inhibitors (GDIs) which prevent Rab-GDP dissociation. Its function is as follows. The small GTPases Rab are key regulators of intracellular membrane trafficking, from the formation of transport vesicles to their fusion with membranes. Rabs cycle between an inactive GDP-bound form and an active GTP-bound form that is able to recruit to membranes different sets of downstream effectors directly responsible for vesicle formation, movement, tethering and fusion. RAB18 is required for the localization of ZFYVE1 to lipid droplets and for its function in mediating the formation of endoplasmic reticulum-lipid droplets (ER-LD) contacts. Also required for maintaining endoplasmic reticulum structure. Plays a role in apical endocytosis/recycling. Plays a key role in eye and brain development and neurodegeneration. This Bos taurus (Bovine) protein is Ras-related protein Rab-18 (RAB18).